A 225-amino-acid chain; its full sequence is uncharacterized protein (225 aa).

Helical transmembrane passes span 1–21 (MFIG…AKKV), 31–51 (SPLL…NVPY), 56–76 (LGGG…AIPL), 88–108 (VEII…TALI), 145–165 (VTAV…PMVI), and 205–225 (VSMI…LSFM).

Belongs to the YohK (E.coli)/YwbG (IPA-22R) (B.subtilis) family.

The protein resides in the cell membrane. This is an uncharacterized protein from Bacillus subtilis (strain 168).